The chain runs to 427 residues: Glutamate-1-semialdehyde 2,1-aminomutase (427 aa).

Lys265 is modified (N6-(pyridoxal phosphate)lysine).

The protein belongs to the class-III pyridoxal-phosphate-dependent aminotransferase family. HemL subfamily. As to quaternary structure, homodimer. It depends on pyridoxal 5'-phosphate as a cofactor.

It localises to the cytoplasm. It carries out the reaction (S)-4-amino-5-oxopentanoate = 5-aminolevulinate. It participates in porphyrin-containing compound metabolism; protoporphyrin-IX biosynthesis; 5-aminolevulinate from L-glutamyl-tRNA(Glu): step 2/2. The polypeptide is Glutamate-1-semialdehyde 2,1-aminomutase (Colwellia psychrerythraea (strain 34H / ATCC BAA-681) (Vibrio psychroerythus)).